The chain runs to 399 residues: MERRLFTSESVSEGHPDKVADQISDAILDAMLEKDPNSHVACETIVTTGMVFVFGEISTNAYVDIQDVVRKTILRIGYDRPELGFDGNNCAVMVDIDEQSPDIAGGVDHSLETRENESDQDELDQIGAGDQGLMFGFAIKETPELMPLPISLAHRLMRRVASLRKDHTLDWLRPDAKAQVTVEYDENNNPLRVDTVVISTQTDAEVSNKEIRRAMIDLVIKEVIPARYLDEKTKFLINPSGRFVIGGPKGDSGLTGRKIIVDTYGGYARHGGGAFSGKDSTKVDRSASYAARYVAKNIVAAGLAYRCEVQLAYAIGVAHPVSIMIDTAGTGKVDDDLLTEAVRHVFDLRPAGIIKMLDLRRPIYEQTAAYGHFGRTDVDLSWEKTDKTQDLLDYIKNNK.

ATP is bound at residue His15. Asp17 contributes to the Mg(2+) binding site. Residue Glu43 participates in K(+) binding. Glu56 and Gln99 together coordinate L-methionine. The flexible loop stretch occupies residues 99–109 (QSPDIAGGVDH). ATP-binding positions include 175–177 (DAK), 242–243 (RF), Asp251, 257–258 (RK), Ala274, and Lys278. Asp251 is an L-methionine binding site. Lys282 is a binding site for L-methionine.

The protein belongs to the AdoMet synthase family. Homotetramer; dimer of dimers. Mg(2+) serves as cofactor. Requires K(+) as cofactor.

It localises to the cytoplasm. It carries out the reaction L-methionine + ATP + H2O = S-adenosyl-L-methionine + phosphate + diphosphate. It participates in amino-acid biosynthesis; S-adenosyl-L-methionine biosynthesis; S-adenosyl-L-methionine from L-methionine: step 1/1. In terms of biological role, catalyzes the formation of S-adenosylmethionine (AdoMet) from methionine and ATP. The overall synthetic reaction is composed of two sequential steps, AdoMet formation and the subsequent tripolyphosphate hydrolysis which occurs prior to release of AdoMet from the enzyme. This Lactobacillus helveticus (strain DPC 4571) protein is S-adenosylmethionine synthase.